The primary structure comprises 475 residues: MAKTLFEKVWEQHLVAEPANEPALLYIDLHLVHEVTSPQAFDGLRMTGRKLRRPDRTVATVDHNVPTIAADRLIIKDEIAARQIDALRRNCAEFGVELFDVQSREQGIVHVIGPELGLTKPGMTIVCGDSHTSTHGAFGALAFGIGTSEVEHVMATQCLPQGRPKTFRISVEGELPEGVTAKDIVLGIIGRIGTDGATGYVIEYAGSAIRSLSMEGRMTVCNMSIEAGARAGMIAPDETTFAYLKDREYSPKGKAWDEAVAAWSELKTDEGATFDRELVIPAIELTPYVTWGTNPGMVIPITDEIPGPETAASEADQRGIERALEYMGLKPGTPMEEVAIDVVFIGSCTNSRIEDLRAAAKVVTGYRVNEKVRAMVVPGSHRVKEQAEREGLDRIFREAGFEWREPGCSMCLGMNPDILTPGERCASTSNRNFEGRQGRGGRTHLVSPMMAAAAAITGHFSDIRTWEFKGEEVLA.

[4Fe-4S] cluster is bound by residues cysteine 348, cysteine 408, and cysteine 411.

The protein belongs to the aconitase/IPM isomerase family. LeuC type 1 subfamily. In terms of assembly, heterodimer of LeuC and LeuD. Requires [4Fe-4S] cluster as cofactor.

The catalysed reaction is (2R,3S)-3-isopropylmalate = (2S)-2-isopropylmalate. The protein operates within amino-acid biosynthesis; L-leucine biosynthesis; L-leucine from 3-methyl-2-oxobutanoate: step 2/4. Its function is as follows. Catalyzes the isomerization between 2-isopropylmalate and 3-isopropylmalate, via the formation of 2-isopropylmaleate. This Acidobacterium capsulatum (strain ATCC 51196 / DSM 11244 / BCRC 80197 / JCM 7670 / NBRC 15755 / NCIMB 13165 / 161) protein is 3-isopropylmalate dehydratase large subunit.